The chain runs to 201 residues: Myosin regulatory light chain 2 (201 aa).

A disordered region spans residues 1-48; it reads MADKDKKVKKKKAKEDAPAEEAPAAAAPAGDRQSSRGSRKAKRTGSNV. A compositionally biased stretch (low complexity) spans 20-29; sequence EEAPAAAAPA. Ser46 bears the Phosphoserine mark. EF-hand domains are found at residues 55–90, 125–158, and 159–194; these read KQVA…LGRL, DEDD…WGDK, and FSAD…SAEE. Ca(2+) is bound by residues Asp68, Asp70, Asp72, and Asp79.

As to quaternary structure, myosin is a hexamer of 2 heavy chains and 4 light chains.

This Bombyx mori (Silk moth) protein is Myosin regulatory light chain 2.